A 210-amino-acid chain; its full sequence is Probable GTP-binding protein EngB (210 aa).

An EngB-type G domain is found at 24 to 199 (QGCEVAFAGR…WEVLGRWLDL (176 aa)). Residues 32–39 (GRSNAGKS), 59–63 (GRTRM), 77–80 (DLPG), 144–147 (TKSD), and 178–180 (FSS) each bind GTP. Residues Ser39 and Thr61 each coordinate Mg(2+).

Belongs to the TRAFAC class TrmE-Era-EngA-EngB-Septin-like GTPase superfamily. EngB GTPase family. Mg(2+) is required as a cofactor.

In terms of biological role, necessary for normal cell division and for the maintenance of normal septation. This Methylococcus capsulatus (strain ATCC 33009 / NCIMB 11132 / Bath) protein is Probable GTP-binding protein EngB.